Consider the following 152-residue polypeptide: Male-specific protein scotti (152 aa).

Belongs to the male-specific scotti family.

In terms of biological role, post-meiotically transcribed gene that has a role in late spermiogenesis; required for actin cone progression during spermatid individualization. The chain is Male-specific protein scotti from Drosophila mojavensis (Fruit fly).